A 189-amino-acid polypeptide reads, in one-letter code: Probable nicotinate-nucleotide adenylyltransferase (189 aa).

The protein belongs to the NadD family.

The enzyme catalyses nicotinate beta-D-ribonucleotide + ATP + H(+) = deamido-NAD(+) + diphosphate. It functions in the pathway cofactor biosynthesis; NAD(+) biosynthesis; deamido-NAD(+) from nicotinate D-ribonucleotide: step 1/1. Functionally, catalyzes the reversible adenylation of nicotinate mononucleotide (NaMN) to nicotinic acid adenine dinucleotide (NaAD). The polypeptide is Probable nicotinate-nucleotide adenylyltransferase (Exiguobacterium sibiricum (strain DSM 17290 / CCUG 55495 / CIP 109462 / JCM 13490 / 255-15)).